Here is a 72-residue protein sequence, read N- to C-terminus: RTCNKTFSDQSKICPPGENICYTKTWCDAFCSQRGKRVELGCAATCPKVKAGVEIKCCSTDNCNKFQFGKPR.

Intrachain disulfides connect Cys3–Cys21, Cys14–Cys42, Cys27–Cys31, Cys46–Cys57, and Cys58–Cys63. An Arginine amide modification is found at Arg72.

The protein belongs to the three-finger toxin family. Long-chain subfamily. Type II alpha-neurotoxin sub-subfamily. In terms of assembly, monomer (predominant). Amidation does not significantly affect toxin selectivity, since the activity profile and binding data are reminiscent of classical long-chain 3-finger toxins with a free carboxyl termini. In terms of tissue distribution, expressed by the venom gland.

The protein localises to the secreted. In terms of biological role, binds with high affinity to muscular (IC(50)=114 nM) and neuronal (alpha-7/CHRNA7) (IC(50)=58 nM) nicotinic acetylcholine receptor (nAChR) and inhibits acetylcholine from binding to the receptor, thereby impairing neuromuscular and neuronal transmission. Competitive radioligand binding assays also demonstrate that this toxin competes with epibatidine binding to the Lymnaea stagnalis acetylcholine-binding protein (Ls-AChBP) (IC(50)=4.9 nM). In Dendroaspis polylepis polylepis (Black mamba), this protein is Alpha-elapitoxin-Dpp2d.